The following is a 108-amino-acid chain: uncharacterized protein (108 aa).

An N-terminal signal peptide occupies residues 1 to 21 (MFRSLFLAAALMAFTPLAANA).

It to E.coli YaaX.

This is an uncharacterized protein from Escherichia coli O157:H7.